A 798-amino-acid polypeptide reads, in one-letter code: Sodium/hydrogen exchanger 4 (798 aa).

The Cytoplasmic portion of the chain corresponds to 1-13 (MALQMFVTYSPWN). The name=A/M1 intramembrane region spans 14–28 (CLLLLVALECSEASS). Over 29 to 69 (DLNESANSTAQYASNAWFAAASSEPEEGISVFELDYDYVQI) the chain is Cytoplasmic. The name=B/M2 intramembrane region spans 70-90 (PYEVTLWILLASLAKIGFHLY). Topologically, residues 91–94 (HRLP) are cytoplasmic. The chain crosses the membrane as a helical span at residues 95 to 115 (GLMPESCLLILVGALVGGIIF). At 116–127 (GTDHKSPPVMDS) the chain is on the extracellular side. The chain crosses the membrane as a helical span at residues 128–148 (SIYFLYLLPPIVLEGGYFMPT). Over 149–154 (RPFFEN) the chain is Cytoplasmic. Residues 155 to 175 (IGSILWWAVLGALINALGIGL) traverse the membrane as a helical segment. Residues 176–196 (SLYLICQVKAFGLGDVNLLQN) are Extracellular-facing. A helical transmembrane segment spans residues 197 to 217 (LLFGSLISAVDPVAVLAVFEE). Residues 218–226 (ARVNEQLYM) lie on the Cytoplasmic side of the membrane. Residues 227–247 (MIFGEALLNDGITVVLYNMLI) form a helical membrane-spanning segment. At 248-270 (AFTKMHKFEDIETVDILAGCARF) the chain is on the extracellular side. Residues 271-291 (IVVGLGGVLFGIVFGFISAFI) form a helical membrane-spanning segment. The Cytoplasmic segment spans residues 292 to 304 (TRFTQNISAIEPL). The helical transmembrane segment at 305-325 (IVFMFSYLSYLAAETLYLSGI) threads the bilayer. At 326 to 356 (LAITACAVTMKKYVEENVSQTSYTTIKYFMK) the chain is on the extracellular side. A glycan (N-linked (GlcNAc...) asparagine) is linked at N342. The helical transmembrane segment at 357-373 (MLSSVSETLIFIFMGVS) threads the bilayer. Residues 374–384 (TVGKNHEWNWA) are Cytoplasmic-facing. Residues 385-405 (FICFTLAFCQIWRAISVFALF) form a helical membrane-spanning segment. At 406 to 420 (YISNQFRTFPFSIKD) the chain is on the extracellular side. An intramembrane region (name=L) is located at residues 421-441 (QCIIFYSGVRGAGSFSLAFLL). Topologically, residues 442–450 (PLSLFPRKK) are extracellular. Residues 451–471 (MFVTATLVVIYFTVFIQGITV) traverse the membrane as a helical segment. Residues 472 to 798 (GPLVRYLDVK…RSHSPLLQKK (327 aa)) are Cytoplasmic-facing. Disordered stretches follow at residues 662–690 (PYGN…GSPS) and 776–798 (RWTA…LQKK). The segment covering 784 to 798 (GRDHHRSHSPLLQKK) has biased composition (basic residues).

This sequence belongs to the monovalent cation:proton antiporter 1 (CPA1) transporter (TC 2.A.36) family. Homodimer; each protomer has one site for sodium and one site for proton binding. Interacts with CHP1 and CHP2. May be phosphorylated.

The protein localises to the basolateral cell membrane. It localises to the apical cell membrane. It is found in the zymogen granule membrane. It carries out the reaction Na(+)(in) + H(+)(out) = Na(+)(out) + H(+)(in). The catalysed reaction is Na(+)(out) + NH4(+)(in) = Na(+)(in) + NH4(+)(out). Functionally, electroneutral antiporter that exchanges sodium for protons or ammonium ions at the basolateral membrane of epithelia to regulate cell volume and intracellular pH upon hypertonic conditions. As part of transcellular ammonia transport in renal tubules, mediates basolateral ammonium extrusion in the medullary thick ascending limb, regulating the corticopapillary ammonium gradient and overall renal acid excretion. Mediates sodium:proton exchange in gastric parietal cells secondary to cAMP-dependent acid secretion and hyperosmolarity. Possibly coupled to chloride:bicarbonate antiporter, enables loading of parietal cells with sodium and chloride ions to maintain cell volume and normal gastric acid secretion. Functions as a sodium sensor in neurons of organum vasculosum of the lamina terminalis where it regulates water intake in response to increased sodium concentration in body fluids. The polypeptide is Sodium/hydrogen exchanger 4 (SLC9A4) (Homo sapiens (Human)).